Consider the following 106-residue polypeptide: Nucleoid-associated protein Smal_0858 (106 aa).

A disordered region spans residues 81–106; it reads IDAESKSKMGSATAGMQLPPGMKLPF.

This sequence belongs to the YbaB/EbfC family. In terms of assembly, homodimer.

It localises to the cytoplasm. It is found in the nucleoid. Binds to DNA and alters its conformation. May be involved in regulation of gene expression, nucleoid organization and DNA protection. This Stenotrophomonas maltophilia (strain R551-3) protein is Nucleoid-associated protein Smal_0858.